The primary structure comprises 257 residues: Phycoerythrobilin:ferredoxin oxidoreductase (257 aa).

It belongs to the HY2 family.

The enzyme catalyses (3Z)-phycoerythrobilin + oxidized 2[4Fe-4S]-[ferredoxin] = 15,16-dihydrobiliverdin + reduced 2[4Fe-4S]-[ferredoxin] + 2 H(+). Functionally, catalyzes the two-electron reduction of the C2 and C3(1) diene system of 15,16-dihydrobiliverdin. This Prochlorococcus marinus (strain MIT 9303) protein is Phycoerythrobilin:ferredoxin oxidoreductase.